We begin with the raw amino-acid sequence, 1009 residues long: Glutamate receptor ionotropic, delta-1 (1009 aa).

Residues 1–20 form the signal peptide; that stretch reads MEALTLWLLPWICQCVTVRA. The interaction with CBLN1 stretch occupies residues 21 to 436; the sequence is DSIIHIGAIF…ERPMGSRLQG (416 aa). The Extracellular segment spans residues 21–562; sequence DSIIHIGAIF…SIFSLFAPFD (542 aa). 3 disulfides stabilise this stretch: Cys80–Cys351, Cys96–Cys128, and Cys294–Cys306. N-linked (GlcNAc...) asparagine glycans are attached at residues Asn131 and Asn200. 2 N-linked (GlcNAc...) asparagine glycosylation sites follow: Asn422 and Asn498. Residues Glu527, Val530, and Asp531 each contribute to the Ca(2+) site. A helical membrane pass occupies residues 563-583; it reads FAVWACIAAAIPVVGVLIFVL. Residues 584-637 lie on the Cytoplasmic side of the membrane; it reads NRIQAVRSQSATQPRPSASATLHSAIWIVYGAFVQQGGESSVNSVAMRIVMGSW. Residues 638–658 traverse the membrane as a helical segment; it reads WLFTLIVCSSYTANLAAFLTV. Over 659 to 830 the chain is Extracellular; the sequence is SRMDNPIRTF…TEGKSLKLHS (172 aa). Asp753, Asp755, and Ser757 together coordinate Ca(2+). The helical transmembrane segment at 831-851 threads the bilayer; that stretch reads FAGVFCILAIGLLLACLVAAL. Over 852 to 1009 the chain is Cytoplasmic; that stretch reads ELWWNSNRCH…ALDTSHGTSI (158 aa). The span at 931–942 shows a compositional bias: polar residues; sequence LPEQSSHGTSRT. Residues 931-960 form a disordered region; sequence LPEQSSHGTSRTLSSGPSSNLPLPLSSSAT. Positions 943–958 are enriched in low complexity; sequence LSSGPSSNLPLPLSSS.

It belongs to the glutamate-gated ion channel (TC 1.A.10.1) family. GRID1 subfamily. Homodimer. Interacts (via extracellular N-terminal domain) with CBLN1 (via C1q domain), and more weakly with CBLN2; the interactions mediate the trans-synaptic adhesion complexes also with neurexins and are required for ligand-gated cation channel activity. As to expression, equally in forebrain and cerebellum.

The protein localises to the postsynaptic cell membrane. The enzyme catalyses Ca(2+)(in) = Ca(2+)(out). It catalyses the reaction Na(+)(in) = Na(+)(out). Its function is as follows. Member of the ionotropic glutamate receptor family, which plays a crucial role in synaptic organization and signal transduction in the central nervous system. Although it shares structural features with ionotropic glutamate receptors, does not bind glutamate as a primary ligand. Instead, forms trans-synaptic adhesion complexes with presynaptic neurexins and cerebellins, regulating NMDA and AMPA receptor activity and influencing synaptic plasticity through signal transduction. In the presence of NRX1B-CBLN1, forms cation-selective channels that are proposed to be gated by glycine and D-serine. However, recent research disputes this ligand-gated cation channel activity. Cation-selective ion channel can be triggered by GRM1 in dopaminergic neurons. Also acts as a receptor for GABA, modulating inhibitory synaptic plasticity through non-ionotropic mechanisms. In Mus musculus (Mouse), this protein is Glutamate receptor ionotropic, delta-1 (Grid1).